The following is a 76-amino-acid chain: Acyl carrier protein (76 aa).

The Carrier domain occupies 1–76 (MSIEERVKKI…SAIDYVQNNQ (76 aa)). Position 36 is an O-(pantetheine 4'-phosphoryl)serine (Ser36).

The protein belongs to the acyl carrier protein (ACP) family. 4'-phosphopantetheine is transferred from CoA to a specific serine of apo-ACP by AcpS. This modification is essential for activity because fatty acids are bound in thioester linkage to the sulfhydryl of the prosthetic group.

It localises to the cytoplasm. It participates in lipid metabolism; fatty acid biosynthesis. Carrier of the growing fatty acid chain in fatty acid biosynthesis. In Mannheimia succiniciproducens (strain KCTC 0769BP / MBEL55E), this protein is Acyl carrier protein.